The sequence spans 486 residues: Amyloid-beta A4 precursor protein-binding family B member 3 (486 aa).

The region spanning 29-61 is the WW domain; it reads TGLPPGWRKIRDAAGTYYWHVPSGSTQWQRPTW. PID domains are found at residues 113-280 and 285-440; these read EPGA…QVEL and SQAA…RTSS. The tract at residues 438-460 is disordered; the sequence is TSSMDSPGGPLPPPLLKGGAGGA.

As to quaternary structure, interacts with APP (via intracellular domain). Interacts with APLP1 and APLP2 (via intracellular domain).

The protein localises to the cytoplasm. It is found in the nucleus. Functionally, may modulate the internalization of amyloid-beta precursor protein. In Mus musculus (Mouse), this protein is Amyloid-beta A4 precursor protein-binding family B member 3.